We begin with the raw amino-acid sequence, 54 residues long: Large ribosomal subunit protein bL33 (54 aa).

This sequence belongs to the bacterial ribosomal protein bL33 family.

This chain is Large ribosomal subunit protein bL33, found in Herpetosiphon aurantiacus (strain ATCC 23779 / DSM 785 / 114-95).